A 295-amino-acid polypeptide reads, in one-letter code: Aquaporin-9 (295 aa).

At 1–24 (MPSEKDGAKKSLMQRLALKSRIAK) the chain is on the cytoplasmic side. A helical membrane pass occupies residues 25-43 (ETLSEFLGTFIMIVLGCSS). Residues 44-57 (IAQAVLSRERFGGI) are Extracellular-facing. The chain crosses the membrane as a helical span at residues 58-77 (ITINIGFASAVVMALYVTFG). At 78-79 (IS) the chain is on the cytoplasmic side. Positions 80-92 (GGHINPAVSFAMC) form an intramembrane region, discontinuously helical. The NPA 1 motif lies at 84-86 (NPA). Over 93–98 (AFGRME) the chain is Cytoplasmic. A helical transmembrane segment spans residues 99–123 (WFKFPFYVGAQFLGAFVGAATVFGI). Residues 124–160 (YYDGLMAFAGGKLLVVGENATAFIFATYPAPFISTPG) are Extracellular-facing. The helical transmembrane segment at 161–178 (AFVDQVVSTMFLLLIVFA) threads the bilayer. Over 179–190 (MFDSRNLGVPRG) the chain is Cytoplasmic. The chain crosses the membrane as a helical span at residues 191–207 (LEPVVIGLLIIVLSCSL). Topologically, residues 208-210 (GLN) are extracellular. The discontinuously helical intramembrane region spans 211–225 (SGCAMNPARDLSPRL). Positions 216 to 218 (NPA) match the NPA 2 motif. Topologically, residues 226-243 (FTALAGWGFEVFTVGNNF) are extracellular. The helical transmembrane segment at 244–264 (WWIPVVGPMIGAFLGGLIYIL) threads the bilayer. The Cytoplasmic portion of the chain corresponds to 265–295 (FIQMHHSKLDPDMKAEPSENNLEKHELSVIM).

The protein belongs to the MIP/aquaporin (TC 1.A.8) family. Homotetramer; each monomer provides an independent glycerol/water pore. Detected in testis and liver. Detected in immature spermatocytes and in interstitial Leydig cells.

It is found in the cell membrane. The protein resides in the basolateral cell membrane. It catalyses the reaction H2O(in) = H2O(out). The enzyme catalyses glycerol(in) = glycerol(out). It carries out the reaction urea(in) = urea(out). The catalysed reaction is (S)-lactate(in) = (S)-lactate(out). It catalyses the reaction NH4(+)(in) = NH4(+)(out). The enzyme catalyses uracil(in) = uracil(out). It carries out the reaction adenine(out) = adenine(in). The catalysed reaction is 3-hydroxybutanoate(in) = 3-hydroxybutanoate(out). It catalyses the reaction D-sorbitol(in) = D-sorbitol(out). The enzyme catalyses D-mannitol(in) = D-mannitol(out). It carries out the reaction H2O2(out) = H2O2(in). The catalysed reaction is arsenite(in) = arsenite(out). It catalyses the reaction selenite(in) = selenite(out). Channel activity is inhibited by mercury ions and phloretin. Its function is as follows. Aquaglyceroporins form homotetrameric transmembrane channels, with each monomer independently mediating glycerol and water transport across the plasma membrane along their osmotic gradient. AQP9 is the primary route for glycerol uptake in hepatocytes, supporting hepatic gluconeogenesis. It exhibits broad specificity and may transport various small, non-charged solutes, including carbamides, polyols, purines, and pyrimidines. AQP9 may also facilitate hepatic urea extrusion. Due to its permeability to lactate, AQP9 might participate in the astrocyte-to-neuron lactate shuttle, supplying neurons with energy. Additionally, AQP9 is permeable to arsenite, contributing to arsenic excretion by the liver and providing partial protection against arsenic toxicity. It is also permeable to H2O2 in vivo. Could also be permeable to ammonium. In Rattus norvegicus (Rat), this protein is Aquaporin-9.